Reading from the N-terminus, the 49-residue chain is Large ribosomal subunit protein bL33A (49 aa).

Belongs to the bacterial ribosomal protein bL33 family.

The protein is Large ribosomal subunit protein bL33A (rpmG1) of Enterococcus faecalis (strain ATCC 700802 / V583).